A 328-amino-acid chain; its full sequence is tRNA dimethylallyltransferase (328 aa).

Gly-25–Ser-32 serves as a coordination point for ATP. Position 27-32 (Thr-27–Ser-32) interacts with substrate. The segment at Asp-50–Gln-53 is interaction with substrate tRNA.

This sequence belongs to the IPP transferase family. As to quaternary structure, monomer. Mg(2+) serves as cofactor.

The catalysed reaction is adenosine(37) in tRNA + dimethylallyl diphosphate = N(6)-dimethylallyladenosine(37) in tRNA + diphosphate. Functionally, catalyzes the transfer of a dimethylallyl group onto the adenine at position 37 in tRNAs that read codons beginning with uridine, leading to the formation of N6-(dimethylallyl)adenosine (i(6)A). The chain is tRNA dimethylallyltransferase from Dehalococcoides mccartyi (strain ATCC BAA-2100 / JCM 16839 / KCTC 5957 / BAV1).